The primary structure comprises 291 residues: Protein pxr1 (291 aa).

Residues 1–11 are compositionally biased toward basic residues; sequence MGLAAPRKRTK. Disordered regions lie at residues 1–26 and 146–268; these read MGLA…RSTD and LVPP…FRGR. Polar residues-rich tracts occupy residues 15 to 25 and 146 to 156; these read DPNNTTWSRST and LVPPTSQNGQA. In terms of domain architecture, G-patch spans 25–79; sequence TDGFGHRILKAQGWTPGSFLGPRNAAHSDLFTTASASHIRVVLKDDNLGLGARPK. The span at 194–205 shows a compositional bias: basic and acidic residues; sequence ETNSRGSREKER. Positions 206–219 are enriched in basic residues; the sequence is KREKRQMRRDKKRK. Residues 230–247 show a composition bias toward basic and acidic residues; it reads MQEKTRVQGPSEDVKPTE.

It belongs to the PINX1 family.

It is found in the nucleus. Its subcellular location is the nucleolus. Involved in rRNA-processing at A0, A1 and A2 sites and negatively regulates telomerase. This chain is Protein pxr1 (pxr1), found in Aspergillus clavatus (strain ATCC 1007 / CBS 513.65 / DSM 816 / NCTC 3887 / NRRL 1 / QM 1276 / 107).